The following is a 53-amino-acid chain: Kunitz-type trypsin inhibitor alpha chain (53 aa).

The segment at 33-53 (GWGLPRRTGDESCPLNVKAVR) is disordered.

It belongs to the protease inhibitor I3 (leguminous Kunitz-type inhibitor) family. As to quaternary structure, heterodimer of an alpha and a beta chain linked by a disulfide bond.

Inhibits trypsin with a Ki of 0.25 uM. Inhibits the trypsin-like proteases in midguts of larval H.armigera, S.exigua, and P.rapae. In Albizia kalkora (Kalkora mimosa), this protein is Kunitz-type trypsin inhibitor alpha chain.